We begin with the raw amino-acid sequence, 432 residues long: Polyadenylate-binding protein RBP47C (432 aa).

The interval 1–55 is disordered; sequence MADVKIQSESESSDSHPVVDNQPPPPPPPPQQPAKEEENQPKTSPTPPPHWMRYP. Positions 22–32 are enriched in pro residues; sequence QPPPPPPPPQQ. 2 consecutive RRM domains span residues 101-183 and 197-276; these read KTIW…WASF and LSIF…PATP. Positions 271–293 are disordered; it reads IGPATPRKTNGYQQQGGYMPNGT. Polar residues predominate over residues 277-286; the sequence is RKTNGYQQQG. An RRM 3 domain is found at 304–376; sequence TTIFVGGLDS…QTVRLSWGRN (73 aa).

The protein belongs to the polyadenylate-binding RBP47 family. In terms of assembly, interacts with the poly(A) tail of mRNA in nucleus. In terms of tissue distribution, expressed in leaves, stems, flowers, and seedlings.

Its subcellular location is the nucleus. It localises to the cytoplasmic granule. Its function is as follows. Heterogeneous nuclear ribonucleoprotein (hnRNP)-protein binding the poly(A) tail of mRNA and probably involved in some steps of pre-mRNA maturation. This Arabidopsis thaliana (Mouse-ear cress) protein is Polyadenylate-binding protein RBP47C (RBP47C).